Reading from the N-terminus, the 506-residue chain is UPF0371 protein FN1121 (506 aa).

It belongs to the UPF0371 family.

This chain is UPF0371 protein FN1121, found in Fusobacterium nucleatum subsp. nucleatum (strain ATCC 25586 / DSM 15643 / BCRC 10681 / CIP 101130 / JCM 8532 / KCTC 2640 / LMG 13131 / VPI 4355).